We begin with the raw amino-acid sequence, 40 residues long: Photosystem I reaction center subunit IX (40 aa).

A helical transmembrane segment spans residues 4 to 24; it reads FFESWPMAAVLWVWLTAGIIV.

Belongs to the PsaJ family.

Its subcellular location is the cellular thylakoid membrane. Functionally, may help in the organization of the PsaE and PsaF subunits. The polypeptide is Photosystem I reaction center subunit IX (Prochlorococcus marinus (strain MIT 9313)).